An 838-amino-acid chain; its full sequence is Lymphoid-specific helicase (838 aa).

Positions 30–115 (MLEEEEQLEA…SLKVKKGKNS (86 aa)) form a coiled coil. A compositionally biased stretch (basic and acidic residues) spans 94–108 (QKKKEKLERKKESLK). A disordered region spans residues 94-135 (QKKKEKLERKKESLKVKKGKNSIDASEEKPVMRKKRGREDES). Position 115 is a phosphoserine (S115). Residues 119–134 (SEEKPVMRKKRGREDE) are compositionally biased toward basic and acidic residues. In terms of domain architecture, Helicase ATP-binding spans 235–403 (RMLWENGING…WSLLNFLLPD (169 aa)). 248–255 (DEMGLGKT) provides a ligand contact to ATP. The DEAH box signature appears at 354–357 (DEGH). Phosphoserine is present on residues S503 and S515. The Helicase C-terminal domain maps to 603-767 (ILDRMLPELK…GLNLSKNFLD (165 aa)).

Belongs to the SNF2/RAD54 helicase family. As to expression, highly expressed in proliferative tissues such as adult thymus and testis, and expressed at lower levels in uterus, small intestine, colon, and peripheral blood mononuclear cells. Also expressed in neoplastic cell lines including those derived from myeloid and lymphoid leukemias.

It localises to the nucleus. Functionally, plays an essential role in normal development and survival. Involved in regulation of the expansion or survival of lymphoid cells. Required for de novo or maintenance DNA methylation. May control silencing of the imprinted CDKN1C gene through DNA methylation. May play a role in formation and organization of heterochromatin, implying a functional role in the regulation of transcription and mitosis. The chain is Lymphoid-specific helicase from Homo sapiens (Human).